The sequence spans 439 residues: Lipid-A-disaccharide synthase (439 aa).

Residues 1–35 (MKEIGNRESGIVDGQRNGASVGSDPTALPIPHSPL) form a disordered region.

This sequence belongs to the LpxB family.

The enzyme catalyses a lipid X + a UDP-2-N,3-O-bis[(3R)-3-hydroxyacyl]-alpha-D-glucosamine = a lipid A disaccharide + UDP + H(+). The protein operates within bacterial outer membrane biogenesis; LPS lipid A biosynthesis. Condensation of UDP-2,3-diacylglucosamine and 2,3-diacylglucosamine-1-phosphate to form lipid A disaccharide, a precursor of lipid A, a phosphorylated glycolipid that anchors the lipopolysaccharide to the outer membrane of the cell. This chain is Lipid-A-disaccharide synthase, found in Xanthomonas euvesicatoria pv. vesicatoria (strain 85-10) (Xanthomonas campestris pv. vesicatoria).